We begin with the raw amino-acid sequence, 142 residues long: Ribonuclease VapC31 (142 aa).

The 137-residue stretch at 3 to 139 (LLDANVLLAA…ARFASVRHIR (137 aa)) folds into the PINc domain. The Mg(2+) site is built by aspartate 5 and aspartate 108.

Belongs to the PINc/VapC protein family. The cofactor is Mg(2+).

Its function is as follows. Toxic component of a type II toxin-antitoxin (TA) system. An RNase. Its toxic effect is neutralized by coexpression with cognate antitoxin VapB31. The protein is Ribonuclease VapC31 of Mycobacterium tuberculosis (strain CDC 1551 / Oshkosh).